Here is a 372-residue protein sequence, read N- to C-terminus: Dual-specificity RNA methyltransferase RlmN (372 aa).

The active-site Proton acceptor is the E94. The 240-residue stretch at 100-339 (DGDRATLCVS…VTIRKTRGDD (240 aa)) folds into the Radical SAM core domain. A disulfide bridge connects residues C107 and C344. Residues C114, C118, and C121 each contribute to the [4Fe-4S] cluster site. S-adenosyl-L-methionine-binding positions include 168-169 (GE), S200, 222-224 (SLH), and N301. Residue C344 is the S-methylcysteine intermediate of the active site.

It belongs to the radical SAM superfamily. RlmN family. [4Fe-4S] cluster serves as cofactor.

The protein localises to the cytoplasm. It catalyses the reaction adenosine(2503) in 23S rRNA + 2 reduced [2Fe-2S]-[ferredoxin] + 2 S-adenosyl-L-methionine = 2-methyladenosine(2503) in 23S rRNA + 5'-deoxyadenosine + L-methionine + 2 oxidized [2Fe-2S]-[ferredoxin] + S-adenosyl-L-homocysteine. The catalysed reaction is adenosine(37) in tRNA + 2 reduced [2Fe-2S]-[ferredoxin] + 2 S-adenosyl-L-methionine = 2-methyladenosine(37) in tRNA + 5'-deoxyadenosine + L-methionine + 2 oxidized [2Fe-2S]-[ferredoxin] + S-adenosyl-L-homocysteine. In terms of biological role, specifically methylates position 2 of adenine 2503 in 23S rRNA and position 2 of adenine 37 in tRNAs. m2A2503 modification seems to play a crucial role in the proofreading step occurring at the peptidyl transferase center and thus would serve to optimize ribosomal fidelity. The sequence is that of Dual-specificity RNA methyltransferase RlmN from Aliivibrio fischeri (strain ATCC 700601 / ES114) (Vibrio fischeri).